A 609-amino-acid polypeptide reads, in one-letter code: MTFSQKDRKETIQETAKTTYDVLIIGGGITGAGVAVQTAAAGMKTVLLEMQDFAEGTSSRSTKLVHGGIRYLKTFDVEVVADTVRERAIVQQIAPHIPKPDPMLLPIYDEPGATFSLFSVKVAMDLYDRLANVTGSKYENYLLTKEEVLAREPQLQAENLVGGGVYLDFRNNDARLVIENIKRAQADGAAMISKAKVVGILHDEQGIINGVEVEDQLTNERFEVHAKVVINTTGPWSDIVRQLDKNDELPPQMRPTKGVHLVVDREKLKVPQPTYFDTGKNDGRMVFVVPRENKTYFGTTDTDYTGDFAHPTVTQEDVDYLLTIVNERFPHAQITLDDIEASWAGLRPLITNNGGSDYNGGGKGKLSDESFEQIVESVKEYLADERQRPVVEKAVKQAQERVEASKVDPSQVSRGSSLERSKDGLLTLAGGKITDYRLMAEGAVKRINELLQESGASFELVDSTTYPVSGGELDAANVEEELAKLADQAQTAGFNEAAATYLAHLYGSNLPQVLNYKTKFEGLDEKESTALNYSLHEEMVLTPVDYLLRRTNHILFMRDTLDDVKAGVVAAMTDFFGWSEEEKAAHVLELNQVIAESDLTALKGGKKDE.

21 to 49 (DVLIIGGGITGAGVAVQTAAAGMKTVLLE) contacts FAD.

Requires FAD as cofactor.

The protein resides in the cytoplasm. It carries out the reaction sn-glycerol 3-phosphate + O2 = dihydroxyacetone phosphate + H2O2. It participates in membrane lipid metabolism; glycerophospholipid metabolism. The chain is Alpha-glycerophosphate oxidase (glpO) from Enterococcus casseliflavus (Enterococcus flavescens).